The chain runs to 255 residues: MYIEVTGYGPALVLIHGWAMHSGVFAPLVEQLRAHHTLYLVDLPGHGYNHTTLTPLALPHVVHAIAAATPPAVWLGWSLGGLFALHAAATLPQVRGLIMLAATPCFVRREDWPHAVEVSIFTQFAEDLKQNYTETINRFLALDTLGSTYAQSELRQLRQILNARHTPNTATLQAGLELLAHTDLRRAVIDLTPPSLWIAGQRDRLVPAASIHAATALAPSGQTELLTITGGGHAPFLSHANQMTAALQHFIATLP.

Residues Trp18, 78–79 (SL), and 139–143 (FLALD) each bind substrate. Ser78 acts as the Nucleophile in catalysis. Active-site residues include Asp203 and His233. His233 is a substrate binding site.

It belongs to the AB hydrolase superfamily. Carboxylesterase BioH family. In terms of assembly, monomer.

The protein resides in the cytoplasm. The enzyme catalyses 6-carboxyhexanoyl-[ACP] methyl ester + H2O = 6-carboxyhexanoyl-[ACP] + methanol + H(+). It functions in the pathway cofactor biosynthesis; biotin biosynthesis. The physiological role of BioH is to remove the methyl group introduced by BioC when the pimeloyl moiety is complete. It allows to synthesize pimeloyl-ACP via the fatty acid synthetic pathway through the hydrolysis of the ester bonds of pimeloyl-ACP esters. In Xylella fastidiosa (strain 9a5c), this protein is Pimeloyl-[acyl-carrier protein] methyl ester esterase.